The following is a 394-amino-acid chain: Acid ceramidase (394 aa).

A signal peptide spans 1-18; it reads MRGQSLLTWVLAAAVTCA. Cysteines 30 and 339 form a disulfide. C142 (nucleophile) is an active-site residue. N-linked (GlcNAc...) asparagine glycans are attached at residues N172, N194, N258, N341, and N347. A disulfide bridge connects residues C387 and C391.

This sequence belongs to the acid ceramidase family. Heterodimer; disulfide-linked. The heterodimer is composed of the disulfide-linked alpha and beta chains produced by autocatalytic cleavage of the precursor. Post-translationally, N-glycosylated. In terms of processing, proteolytically cleaved into two chains alpha and beta that remain associated via a disulfide bond. Cleavage gives rise to a conformation change that activates the enzyme. The same catalytic Cys residue mediates the autoproteolytic cleavage and subsequent hydrolysis of lipid substrates. The beta chain may undergo an additional C-terminal processing. As to expression, widely expressed.

The protein resides in the lysosome. The protein localises to the secreted. It carries out the reaction an N-acylsphing-4-enine + H2O = sphing-4-enine + a fatty acid. The enzyme catalyses N-dodecanoylsphing-4-enine + H2O = dodecanoate + sphing-4-enine. The catalysed reaction is N-(9Z-octadecenoyl)-sphing-4-enine + H2O = sphing-4-enine + (9Z)-octadecenoate. It catalyses the reaction N-tetradecanoylsphing-4-enine + H2O = tetradecanoate + sphing-4-enine. It carries out the reaction N-hexadecanoylsphing-4-enine + H2O = sphing-4-enine + hexadecanoate. The enzyme catalyses N-octadecanoylsphing-4-enine + H2O = sphing-4-enine + octadecanoate. The catalysed reaction is N-dodecanoyl-(4R)-hydroxysphinganine + H2O = (4R)-hydroxysphinganine + dodecanoate. It catalyses the reaction N-(dodecanoyl)-sphinganine + H2O = dodecanoate + sphinganine. It carries out the reaction N-(acetyl)-sphing-4-enine + H2O = sphing-4-enine + acetate. The enzyme catalyses N-(hexanoyl)sphing-4-enine + H2O = hexanoate + sphing-4-enine. The catalysed reaction is N-octanoylsphing-4-enine + H2O = octanoate + sphing-4-enine. It catalyses the reaction N-dodecanoylethanolamine + H2O = dodecanoate + ethanolamine. It participates in lipid metabolism; sphingolipid metabolism. Its function is as follows. Lysosomal ceramidase that hydrolyzes sphingolipid ceramides into sphingosine and free fatty acids at acidic pH. Ceramides, sphingosine, and its phosphorylated form sphingosine-1-phosphate are bioactive lipids that mediate cellular signaling pathways regulating several biological processes including cell proliferation, apoptosis and differentiation. Has a higher catalytic efficiency towards C12-ceramides versus other ceramides. Also catalyzes the reverse reaction allowing the synthesis of ceramides from fatty acids and sphingosine. For the reverse synthetic reaction, the natural sphingosine D-erythro isomer is more efficiently utilized as a substrate compared to D-erythro-dihydrosphingosine and D-erythro-phytosphingosine, while the fatty acids with chain lengths of 12 or 14 carbons are the most efficiently used. Also has an N-acylethanolamine hydrolase activity. By regulating the levels of ceramides, sphingosine and sphingosine-1-phosphate in the epidermis, mediates the calcium-induced differentiation of epidermal keratinocytes. Also indirectly regulates tumor necrosis factor/TNF-induced apoptosis. By regulating the intracellular balance between ceramides and sphingosine, in adrenocortical cells, probably also acts as a regulator of steroidogenesis. The sequence is that of Acid ceramidase from Mus musculus (Mouse).